We begin with the raw amino-acid sequence, 1366 residues long: Protein strawberry notch homolog 2 (1366 aa).

Disordered stretches follow at residues 1-24 (MLAV…GSLL), 174-217 (QEQS…KQHP), 614-640 (STKR…KAPR), and 1324-1366 (HAGP…QAPL). The span at 15-24 (HEPPPAGSLL) shows a compositional bias: pro residues. Residues 182 to 194 (PEEEDEAEEEEAE) are compositionally biased toward acidic residues. Residues 614 to 637 (STKRKRDRGAGSKRKRRPRGRGAK) are compositionally biased toward basic residues. The span at 1333 to 1347 (LGEGAGAGGAAGGGP) shows a compositional bias: gly residues.

It belongs to the SBNO family. As to quaternary structure, interacts with TAL1; this interaction inhibits TAL1 occupancy of the DCSTAMP promoter, leading to the activation of the DCSTAMP promoter by the transcription factor MITF. As to expression, detected in macrophages. IL10 regulates expression in a STAT3-dependent way.

In terms of biological role, acts as a transcriptional coregulator, that can have both coactivator and corepressor functions. Inhibits the DCSTAMP-repressive activity of TAL1, hence enhancing the access of the transcription factor MITF to the DC-STAMP promoter in osteoclast. Plays a role in bone homeostasis; required as a positive regulator in TNFSF11//RANKL-mediated osteoclast fusion via a DCSTAMP-dependent pathway. May also be required in the regulation of osteoblast differentiation. Involved in the transcriptional corepression of NF-kappaB in macrophages. Plays a role as a regulator in the pro-inflammatory cascade. The sequence is that of Protein strawberry notch homolog 2 (SBNO2) from Homo sapiens (Human).